A 151-amino-acid chain; its full sequence is Nucleoside diphosphate kinase (151 aa).

ATP is bound by residues Lys10, Phe58, Arg86, Thr92, Arg103, and Asn113. Residue His116 is the Pros-phosphohistidine intermediate of the active site.

It belongs to the NDK family. As to quaternary structure, homotetramer. Mg(2+) serves as cofactor.

It is found in the cytoplasm. The enzyme catalyses dZDP + ATP = dZTP + ADP. The catalysed reaction is a 2'-deoxyribonucleoside 5'-diphosphate + ATP = a 2'-deoxyribonucleoside 5'-triphosphate + ADP. It carries out the reaction a ribonucleoside 5'-diphosphate + ATP = a ribonucleoside 5'-triphosphate + ADP. It functions in the pathway purine metabolism. In terms of biological role, major role in the synthesis of nucleoside triphosphates other than ATP. The ATP gamma phosphate is transferred to the NDP beta phosphate via a ping-pong mechanism, using a phosphorylated active-site intermediate. Functionally, (Microbial infection) Catalyzes the phosphorylation of dZDP to dZTP, when the bacterium is infected by a phage that produces the substrate for the synthesis of dZTP (2- amino-2'-deoxyadenosine 5'-triphosphate), which is then used by the phage as a DNA polymerase substrate. The polypeptide is Nucleoside diphosphate kinase (Synechococcus sp. (strain CC9605)).